A 201-amino-acid polypeptide reads, in one-letter code: Glutathione peroxidase 1 (201 aa).

Serine 32 carries the post-translational modification Phosphoserine. The active site involves selenocysteine 47. Selenocysteine 47 is a non-standard amino acid (selenocysteine). 3 positions are modified to N6-acetyllysine; alternate: lysine 86, lysine 112, and lysine 146. An N6-succinyllysine; alternate mark is found at lysine 86, lysine 112, and lysine 146. A phosphoserine mark is found at serine 195 and serine 199.

It belongs to the glutathione peroxidase family. In terms of assembly, homotetramer. Interacts with MIEN1. Post-translationally, during periods of oxidative stress, Sec-47 may react with a superoxide radical, irreversibly lose hydroselenide and be converted to dehydroalanine.

Its subcellular location is the cytoplasm. It localises to the mitochondrion. It catalyses the reaction 2 glutathione + H2O2 = glutathione disulfide + 2 H2O. It carries out the reaction a hydroperoxy polyunsaturated fatty acid + 2 glutathione = a hydroxy polyunsaturated fatty acid + glutathione disulfide + H2O. The enzyme catalyses tert-butyl hydroperoxide + 2 glutathione = tert-butanol + glutathione disulfide + H2O. The catalysed reaction is cumene hydroperoxide + 2 glutathione = 2-phenylpropan-2-ol + glutathione disulfide + H2O. It catalyses the reaction (13S)-hydroperoxy-(9Z,11E)-octadecadienoate + 2 glutathione = (13S)-hydroxy-(9Z,11E)-octadecadienoate + glutathione disulfide + H2O. It carries out the reaction (9S)-hydroperoxy-(10E,12Z)-octadecadienoate + 2 glutathione = (9S)-hydroxy-(10E,12Z)-octadecadienoate + glutathione disulfide + H2O. The enzyme catalyses (5S)-hydroperoxy-(6E,8Z,11Z,14Z)-eicosatetraenoate + 2 glutathione = (5S)-hydroxy-(6E,8Z,11Z,14Z)-eicosatetraenoate + glutathione disulfide + H2O. The catalysed reaction is (12S)-hydroperoxy-(5Z,8Z,10E,14Z)-eicosatetraenoate + 2 glutathione = (12S)-hydroxy-(5Z,8Z,10E,14Z)-eicosatetraenoate + glutathione disulfide + H2O. It catalyses the reaction (12R)-hydroperoxy-(5Z,8Z,10E,14Z)-eicosatetraenoate + 2 glutathione = (12R)-hydroxy-(5Z,8Z,10E,14Z)-eicosatetraenoate + glutathione disulfide + H2O. It carries out the reaction (15S)-hydroperoxy-(5Z,8Z,11Z,13E)-eicosatetraenoate + 2 glutathione = (15S)-hydroxy-(5Z,8Z,11Z,13E)-eicosatetraenoate + glutathione disulfide + H2O. The enzyme catalyses (5S)-hydroperoxy-(6E,8Z,11Z,14Z,17Z)-eicosapentaenoate + 2 glutathione = (5S)-hydroxy-(6E,8Z,11Z,14Z,17Z)-eicosapentaenoate + glutathione disulfide + H2O. The catalysed reaction is (12S)-hydroperoxy-(5Z,8Z,10E,14Z,17Z)-eicosapentaenoate + 2 glutathione = (12S)-hydroxy-(5Z,8Z,10E,14Z,17Z)-eicosapentaenoate + glutathione disulfide + H2O. It catalyses the reaction (15S)-hydroperoxy-(5Z,8Z,11Z,13E,17Z)-eicosapentaenoate + 2 glutathione = (15S)-hydroxy-(5Z,8Z,11Z,13E,17Z)-eicosapentaenoate + glutathione disulfide + H2O. It carries out the reaction (15S)-hydroperoxy-(11Z,13E)-eicosadienoate + 2 glutathione = (15S)-hydroxy-(11Z,13E)-eicosadienoate + glutathione disulfide + H2O. The enzyme catalyses (17S)-hydroperoxy-(4Z,7Z,10Z,13Z,15E,19Z)-docosahexaenoate + 2 glutathione = (17S)-hydroxy-(4Z,7Z,10Z,13Z,15E,19Z)-docosahexaenoate + glutathione disulfide + H2O. Catalyzes the reduction of hydroperoxides in a glutathione-dependent manner thus regulating cellular redox homeostasis. Can reduce small soluble hydroperoxides such as H2O2, cumene hydroperoxide and tert-butyl hydroperoxide, as well as several fatty acid-derived hydroperoxides. In platelets catalyzes the reduction of 12-hydroperoxyeicosatetraenoic acid, the primary product of the arachidonate 12-lipoxygenase pathway. This is Glutathione peroxidase 1 (GPX1) from Pongo pygmaeus (Bornean orangutan).